The primary structure comprises 3390 residues: Genome polyprotein (3390 aa).

The tract at residues 1–15 (MNNQRKKTGKPSINM) is interaction with host EXOC1. Over 1–100 (MNNQRKKTGK…MLSIINQRKK (100 aa)) the chain is Cytoplasmic. The interval 37–72 (LLNGQGPMKLVMAFIAFLRFLAIPPTAGVLARWGTF) is hydrophobic; homodimerization of capsid protein C. Positions 101–114 (TSLCLMMILPAALA) are cleaved as a propeptide — ER anchor for the capsid protein C, removed in mature form by serine protease NS3. Residues 101–120 (TSLCLMMILPAALAFHLTSR) form a helical membrane-spanning segment. Over 121-243 (DGEPRMIVGK…VEKVETWALR (123 aa)) the chain is Extracellular. Residue asparagine 183 is glycosylated (N-linked (GlcNAc...) asparagine; by host). The helical transmembrane segment at 244–264 (HPGFTILALFLAHYIGTSLTQ) threads the bilayer. Residue lysine 265 is a topological domain, cytoplasmic. A helical membrane pass occupies residues 266–280 (VVIFILLMLVTPSMT). Residues 281–723 (MRCVGVGNRD…VHQIFGSAYT (443 aa)) lie on the Extracellular side of the membrane. Disulfide bonds link cysteine 283–cysteine 310, cysteine 340–cysteine 401, cysteine 354–cysteine 385, and cysteine 372–cysteine 396. N-linked (GlcNAc...) asparagine; by host glycosylation occurs at asparagine 347. A fusion peptide region spans residues 378–391 (DRGWGNGCGLFGKG). Asparagine 433 is a glycosylation site (N-linked (GlcNAc...) asparagine; by host). Intrachain disulfides connect cysteine 463–cysteine 563 and cysteine 580–cysteine 611. The chain crosses the membrane as a helical span at residues 724–744 (ALFSGVSWVMKIGIGVLLTWI). The Cytoplasmic portion of the chain corresponds to 745–750 (GLNSKN). The chain crosses the membrane as a helical span at residues 751 to 771 (TSMSFSCIAIGIITLYLGAVV). Residues 772 to 1193 (QADMGCVINW…MIGSNASDRM (422 aa)) are Extracellular-facing. 6 disulfide bridges follow: cysteine 777–cysteine 788, cysteine 828–cysteine 916, cysteine 952–cysteine 996, cysteine 1053–cysteine 1102, cysteine 1064–cysteine 1086, and cysteine 1085–cysteine 1089. 2 N-linked (GlcNAc...) asparagine; by host glycosylation sites follow: asparagine 903 and asparagine 980. Asparagine 1132 and asparagine 1188 each carry an N-linked (GlcNAc...) asparagine; by host glycan. Residues 1194–1218 (GMGVTYLALIATFKIQPFLALGFFL) form a helical membrane-spanning segment. Residues 1219-1224 (RKLTSR) are Cytoplasmic-facing. The helical transmembrane segment at 1225-1243 (ENLLLGVGLAMATTLQLPE) threads the bilayer. At 1244–1267 (DIEQMANGVALGLMALKLITQFET) the chain is on the lumenal side. A helical transmembrane segment spans residues 1268-1288 (YQLWTALVSLTCSNTIFTLTV). Position 1289 (alanine 1289) is a topological domain, cytoplasmic. A helical transmembrane segment spans residues 1290-1308 (WRTATLILAGVSLLPVCQS). Topologically, residues 1309–1315 (SSMRKTD) are lumenal. The chain crosses the membrane as a helical span at residues 1316 to 1336 (WLPMTVAAMGVPPLPLFIFSL). Over 1337–1344 (KDTLKRRS) the chain is Cytoplasmic. A helical membrane pass occupies residues 1345-1365 (WPLNEGVMAVGLVSILASSLL). Over 1366-1368 (RND) the chain is Lumenal. Residues 1369–1389 (VPMAGPLVAGGLLIACYVITG) form a helical membrane-spanning segment. The Cytoplasmic segment spans residues 1390 to 1443 (TSADLTVEKAPDVTWEEEAEQTGVSHNLMITVDDDGTMRIKDDETENILTVLLK). Residues 1396-1435 (VEKAPDVTWEEEAEQTGVSHNLMITVDDDGTMRIKDDETE) form an interacts with and activates NS3 protease region. The segment at residues 1444–1464 (TALLIVSGIFPYSIPATLLVW) is an intramembrane region (helical). Residues 1465 to 2146 (HTWQKQTQRS…VEELPETMET (682 aa)) lie on the Cytoplasmic side of the membrane. The region spanning 1474 to 1651 (SGVLWDVPSP…NAEPDGPTPE (178 aa)) is the Peptidase S7 domain. Active-site charge relay system; for serine protease NS3 activity residues include histidine 1524, aspartate 1548, and serine 1608. Residues 1654-1810 (EEMFKKRNLT…QSNAPIQDEE (157 aa)) enclose the Helicase ATP-binding domain. The interval 1658–1661 (KKRN) is important for RNA-binding. An ATP-binding site is contributed by 1667–1674 (LHPGSGKT). The short motif at 1758–1761 (DEAH) is the DEAH box element. Residues 1820–1986 (SGNEWITDFA…GIIPALFEPE (167 aa)) enclose the Helicase C-terminal domain. Lysine 1862 bears the N6-acetyllysine; by host mark. The chain crosses the membrane as a helical span at residues 2147-2167 (LLLLGLMILLTGGAMLFLISG). The Lumenal segment spans residues 2168–2169 (KG). Positions 2170–2190 (IGKTSIGLICVIASSGMLWMA) form an intramembrane region, helical. A topological domain (lumenal) is located at residue glutamate 2191. Residues 2192-2212 (VPLQWIASAIVLEFFMMVLLI) form a helical membrane-spanning segment. Topologically, residues 2213–2227 (PEPEKQRTPQDNQLA) are cytoplasmic. The chain crosses the membrane as a helical span at residues 2228 to 2248 (YVVIGILTLAATIAANEMGLL). Residues 2249-2273 (ETTKRDLGMSKEPGVVSPTSYLDVD) lie on the Lumenal side of the membrane. The helical intramembrane region spans 2274 to 2294 (LHPASAWTLYAVATTVITPML). Residues 2295 to 2305 (RHTIENSTANV) lie on the Lumenal side of the membrane. Asparagine 2300 and asparagine 2304 each carry an N-linked (GlcNAc...) asparagine; by host glycan. Residues 2306–2326 (SLAAIANQAVVLMGLDKGWPI) constitute an intramembrane region (helical). The Lumenal segment spans residues 2327-2346 (SKMDLGVPLLALGCYSQVNP). Residues 2347–2367 (LTLTAAVLLLITHYAIIGPGL) form a helical membrane-spanning segment. Residues 2368–2412 (QAKATREAQKRTAAGIMKNPTVDGIMTIDLDSVIFDSKFEKQLGQ) are Cytoplasmic-facing. Residues 2413 to 2433 (VMLLVLCAVQLLLMRTSWALC) form a helical membrane-spanning segment. The Lumenal portion of the chain corresponds to 2434–2458 (EALTLATGPITTLWEGSPGKFWNTT). An N-linked (GlcNAc...) asparagine; by host glycan is attached at asparagine 2456. A helical membrane pass occupies residues 2459–2479 (IAVSMANIFRGSYLAGAGLAF). The Cytoplasmic portion of the chain corresponds to 2480–3390 (SIMKSVGTGK…KEEESEGAIW (911 aa)). An mRNA cap 0-1 NS5-type MT domain is found at 2492–2753 (TGSQGETLGE…DVDLGAGTRH (262 aa)). Serine 2546 serves as a coordination point for S-adenosyl-L-methionine. The residue at position 2546 (serine 2546) is a Phosphoserine. Lysine 2551 serves as the catalytic For 2'-O-MTase activity. Positions 2567–2570 (VIDL) match the SUMO-interacting motif motif. S-adenosyl-L-methionine is bound by residues glycine 2576, tryptophan 2577, threonine 2594, lysine 2595, aspartate 2621, and valine 2622. The active-site For 2'-O-MTase activity is aspartate 2636. Position 2637 (isoleucine 2637) interacts with S-adenosyl-L-methionine. Residues lysine 2670 and glutamate 2706 each act as for 2'-O-MTase activity in the active site. Tyrosine 2708 lines the S-adenosyl-L-methionine pocket. The Zn(2+) site is built by glutamate 2927, histidine 2931, cysteine 2936, and cysteine 2939. Residues 3018–3168 (AMYADDTAGW…PIDDRFANAL (151 aa)) form the RdRp catalytic domain. Residues histidine 3202, cysteine 3218, and cysteine 3337 each contribute to the Zn(2+) site.

In the N-terminal section; belongs to the class I-like SAM-binding methyltransferase superfamily. mRNA cap 0-1 NS5-type methyltransferase family. Homodimer. Interacts (via N-terminus) with host EXOC1 (via C-terminus); this interaction results in EXOC1 degradation through the proteasome degradation pathway. In terms of assembly, forms heterodimers with envelope protein E in the endoplasmic reticulum and Golgi. As to quaternary structure, homodimer; in the endoplasmic reticulum and Golgi. Interacts with protein prM. Interacts with non-structural protein 1. Homodimer; Homohexamer when secreted. Interacts with envelope protein E. In terms of assembly, interacts (via N-terminus) with serine protease NS3. As to quaternary structure, forms a heterodimer with serine protease NS3. May form homooligomers. Forms a heterodimer with NS2B. Interacts with NS4B. Interacts with unphosphorylated RNA-directed RNA polymerase NS5; this interaction stimulates RNA-directed RNA polymerase NS5 guanylyltransferase activity. Interacts with host SHFL. In terms of assembly, interacts with host MAVS; this interaction inhibits the synthesis of IFN-beta. Interacts with host SHFL. Interacts with host AUP1; the interaction occurs in the presence of Dengue virus NS4B and induces lipophagy which facilitates production of virus progeny particles. As to quaternary structure, interacts with serine protease NS3. Homodimer. Interacts with host STAT2; this interaction inhibits the phosphorylation of the latter, and, when all viral proteins are present (polyprotein), targets STAT2 for degradation. Interacts with serine protease NS3. Post-translationally, specific enzymatic cleavages in vivo yield mature proteins. Cleavages in the lumen of endoplasmic reticulum are performed by host signal peptidase, whereas cleavages in the cytoplasmic side are performed by serine protease NS3. Signal cleavage at the 2K-4B site requires a prior NS3 protease-mediated cleavage at the 4A-2K site. Cleaved in post-Golgi vesicles by a host furin, releasing the mature small envelope protein M, and peptide pr. This cleavage is incomplete as up to 30% of viral particles still carry uncleaved prM. In terms of processing, N-glycosylated. Post-translationally, N-glycosylated. The excreted form is glycosylated and this is required for efficient secretion of the protein from infected cells. Acetylated by host KAT5. Acetylation modulates NS3 RNA-binding and unwinding activities and plays an important positive role for viral replication. In terms of processing, sumoylation of RNA-directed RNA polymerase NS5 increases NS5 protein stability allowing proper viral RNA replication. Post-translationally, phosphorylated on serines residues. This phosphorylation may trigger NS5 nuclear localization.

It is found in the virion. The protein localises to the host nucleus. The protein resides in the host cytoplasm. Its subcellular location is the host perinuclear region. It localises to the secreted. It is found in the virion membrane. The protein localises to the host endoplasmic reticulum membrane. The protein resides in the host mitochondrion. It catalyses the reaction Selective hydrolysis of -Xaa-Xaa-|-Yaa- bonds in which each of the Xaa can be either Arg or Lys and Yaa can be either Ser or Ala.. The catalysed reaction is RNA(n) + a ribonucleoside 5'-triphosphate = RNA(n+1) + diphosphate. It carries out the reaction a ribonucleoside 5'-triphosphate + H2O = a ribonucleoside 5'-diphosphate + phosphate + H(+). The enzyme catalyses ATP + H2O = ADP + phosphate + H(+). It catalyses the reaction a 5'-end (5'-triphosphoguanosine)-ribonucleoside in mRNA + S-adenosyl-L-methionine = a 5'-end (N(7)-methyl 5'-triphosphoguanosine)-ribonucleoside in mRNA + S-adenosyl-L-homocysteine. The catalysed reaction is a 5'-end (N(7)-methyl 5'-triphosphoguanosine)-ribonucleoside in mRNA + S-adenosyl-L-methionine = a 5'-end (N(7)-methyl 5'-triphosphoguanosine)-(2'-O-methyl-ribonucleoside) in mRNA + S-adenosyl-L-homocysteine + H(+). In terms of biological role, plays a role in virus budding by binding to the cell membrane and gathering the viral RNA into a nucleocapsid that forms the core of a mature virus particle. During virus entry, may induce genome penetration into the host cytoplasm after hemifusion induced by the surface proteins. Can migrate to the cell nucleus where it modulates host functions. Overcomes the anti-viral effects of host EXOC1 by sequestering and degrading the latter through the proteasome degradation pathway. Its function is as follows. Inhibits RNA silencing by interfering with host Dicer. Prevents premature fusion activity of envelope proteins in trans-Golgi by binding to envelope protein E at pH6.0. After virion release in extracellular space, gets dissociated from E dimers. Functionally, acts as a chaperone for envelope protein E during intracellular virion assembly by masking and inactivating envelope protein E fusion peptide. prM is the only viral peptide matured by host furin in the trans-Golgi network probably to avoid catastrophic activation of the viral fusion activity in acidic Golgi compartment prior to virion release. prM-E cleavage is inefficient, and many virions are only partially matured. These uncleaved prM would play a role in immune evasion. In terms of biological role, may play a role in virus budding. Exerts cytotoxic effects by activating a mitochondrial apoptotic pathway through M ectodomain. May display a viroporin activity. Its function is as follows. Binds to host cell surface receptor and mediates fusion between viral and cellular membranes. Envelope protein is synthesized in the endoplasmic reticulum in the form of heterodimer with protein prM. They play a role in virion budding in the ER, and the newly formed immature particle is covered with 60 spikes composed of heterodimer between precursor prM and envelope protein E. The virion is transported to the Golgi apparatus where the low pH causes dissociation of PrM-E heterodimers and formation of E homodimers. prM-E cleavage is inefficient, and many virions are only partially matured. These uncleaved prM would play a role in immune evasion. Involved in immune evasion, pathogenesis and viral replication. Once cleaved off the polyprotein, is targeted to three destinations: the viral replication cycle, the plasma membrane and the extracellular compartment. Essential for viral replication. Required for formation of the replication complex and recruitment of other non-structural proteins to the ER-derived membrane structures. Excreted as a hexameric lipoparticle that plays a role against host immune response. Antagonizing the complement function. Binds to the host macrophages and dendritic cells. Inhibits signal transduction originating from Toll-like receptor 3 (TLR3). Functionally, disrupts the host endothelial glycocalyx layer of host pulmonary microvascular endothelial cells, inducing degradation of sialic acid and shedding of heparan sulfate proteoglycans. NS1 induces expression of sialidases, heparanase, and activates cathepsin L, which activates heparanase via enzymatic cleavage. These effects are probably linked to the endothelial hyperpermeability observed in severe dengue disease. In terms of biological role, component of the viral RNA replication complex that functions in virion assembly and antagonizes the host immune response. Its function is as follows. Required cofactor for the serine protease function of NS3. May have membrane-destabilizing activity and form viroporins. Displays three enzymatic activities: serine protease, NTPase and RNA helicase. NS3 serine protease, in association with NS2B, performs its autocleavage and cleaves the polyprotein at dibasic sites in the cytoplasm: C-prM, NS2A-NS2B, NS2B-NS3, NS3-NS4A, NS4A-2K and NS4B-NS5. NS3 RNA helicase binds RNA and unwinds dsRNA in the 3' to 5' direction. Functionally, regulates the ATPase activity of the NS3 helicase activity. NS4A allows NS3 helicase to conserve energy during unwinding. Plays a role in the inhibition of the host innate immune response. Interacts with host MAVS and thereby prevents the interaction between RIGI and MAVS. In turn, IFN-beta production is impaired. Interacts with host AUP1 which mediates induction of lipophagy in host cells and facilitates production of virus progeny particles. In terms of biological role, functions as a signal peptide for NS4B and is required for the interferon antagonism activity of the latter. Its function is as follows. Induces the formation of ER-derived membrane vesicles where the viral replication takes place. Inhibits interferon (IFN)-induced host STAT1 phosphorylation and nuclear translocation, thereby preventing the establishment of cellular antiviral state by blocking the IFN-alpha/beta pathway. Replicates the viral (+) and (-) RNA genome, and performs the capping of genomes in the cytoplasm. NS5 methylates viral RNA cap at guanine N-7 and ribose 2'-O positions. Besides its role in RNA genome replication, also prevents the establishment of cellular antiviral state by blocking the interferon-alpha/beta (IFN-alpha/beta) signaling pathway. Inhibits host TYK2 and STAT2 phosphorylation, thereby preventing activation of JAK-STAT signaling pathway. The sequence is that of Genome polyprotein (pol) from Dengue virus type 3 (strain Sri Lanka/1266/2000) (DENV-3).